Reading from the N-terminus, the 250-residue chain is Protein KPLCE (250 aa).

Skin-specific.

This Homo sapiens (Human) protein is Protein KPLCE.